The following is a 207-amino-acid chain: Large ribosomal subunit protein uL4 (207 aa).

The interval 44 to 76 (RRQGTQSTKTKSEVRGGGKKPWRQKGTGRARQG) is disordered. The segment covering 60-71 (GGKKPWRQKGTG) has biased composition (basic residues).

It belongs to the universal ribosomal protein uL4 family. As to quaternary structure, part of the 50S ribosomal subunit.

One of the primary rRNA binding proteins, this protein initially binds near the 5'-end of the 23S rRNA. It is important during the early stages of 50S assembly. It makes multiple contacts with different domains of the 23S rRNA in the assembled 50S subunit and ribosome. In terms of biological role, forms part of the polypeptide exit tunnel. This chain is Large ribosomal subunit protein uL4, found in Ruminiclostridium cellulolyticum (strain ATCC 35319 / DSM 5812 / JCM 6584 / H10) (Clostridium cellulolyticum).